Reading from the N-terminus, the 178-residue chain is Inner membrane-spanning protein YciB (178 aa).

6 consecutive transmembrane segments (helical) span residues 1 to 21 (MKIL…KMTG), 23 to 43 (IIIA…FTWF), 51 to 71 (MHLV…LLGD), 77 to 97 (WKPT…QFIG), 120 to 140 (LNLA…YVAF), and 150 to 170 (FKLF…GIYL).

The protein belongs to the YciB family.

It localises to the cell inner membrane. Functionally, plays a role in cell envelope biogenesis, maintenance of cell envelope integrity and membrane homeostasis. The polypeptide is Inner membrane-spanning protein YciB (Marinomonas sp. (strain MWYL1)).